Consider the following 294-residue polypeptide: NAD kinase (294 aa).

D74 serves as the catalytic Proton acceptor. NAD(+) contacts are provided by residues 74–75 (DG), 148–149 (NE), H159, R176, D178, 189–194 (TAYSLS), and Q249.

The protein belongs to the NAD kinase family. The cofactor is a divalent metal cation.

The protein localises to the cytoplasm. It carries out the reaction NAD(+) + ATP = ADP + NADP(+) + H(+). Functionally, involved in the regulation of the intracellular balance of NAD and NADP, and is a key enzyme in the biosynthesis of NADP. Catalyzes specifically the phosphorylation on 2'-hydroxyl of the adenosine moiety of NAD to yield NADP. The polypeptide is NAD kinase (Vibrio vulnificus (strain YJ016)).